The chain runs to 162 residues: Large ribosomal subunit protein bL17 (162 aa).

Residues 126–162 are disordered; it reads KKEEVKTKSRRGGKAKKAEPTTEAPANTTEETTDSAE. A compositionally biased stretch (low complexity) spans 146–155; it reads TTEAPANTTE.

It belongs to the bacterial ribosomal protein bL17 family. Part of the 50S ribosomal subunit. Contacts protein L32.

This Flavobacterium psychrophilum (strain ATCC 49511 / DSM 21280 / CIP 103535 / JIP02/86) protein is Large ribosomal subunit protein bL17.